A 479-amino-acid chain; its full sequence is Variant surface glycoprotein ILTAT 1.22 (479 aa).

Residues 1–12 (MDTAQVFALFYM) form the signal peptide. Asparagine 120 and asparagine 458 each carry an N-linked (GlcNAc...) asparagine glycan. Asparagine 462 is lipidated: GPI-anchor amidated asparagine. A propeptide spans 463–479 (NSFAIKTSTLLLAVLLF) (removed in mature form).

It is found in the cell membrane. Functionally, VSG forms a coat on the surface of the parasite. The trypanosome evades the immune response of the host by expressing a series of antigenically distinct VSGs from an estimated 1000 VSG genes. This is Variant surface glycoprotein ILTAT 1.22 from Trypanosoma brucei brucei.